Consider the following 95-residue polypeptide: MFGRLGAPEIILILVVIILLFGAKKLPDMARSLGKSARILKSEAKAMKSEAKADDAAPADPPNPEQSAAQRTIQAAPGDVTSSRPVTEPTDTTKR.

The chain crosses the membrane as a helical span at residues Met-1 to Phe-21. The segment covering Ala-44 to Asp-55 has biased composition (basic and acidic residues). The interval Ala-44 to Arg-95 is disordered.

It belongs to the TatA/E family. As to quaternary structure, the Tat system comprises two distinct complexes: a TatABC complex, containing multiple copies of TatA, TatB and TatC subunits, and a separate TatA complex, containing only TatA subunits. Substrates initially bind to the TatABC complex, which probably triggers association of the separate TatA complex to form the active translocon.

Its subcellular location is the cell membrane. Part of the twin-arginine translocation (Tat) system that transports large folded proteins containing a characteristic twin-arginine motif in their signal peptide across membranes. TatA could form the protein-conducting channel of the Tat system. The protein is Sec-independent protein translocase protein TatA of Streptomyces coelicolor (strain ATCC BAA-471 / A3(2) / M145).